Consider the following 204-residue polypeptide: Proteasome subunit beta type-3 (204 aa).

It belongs to the peptidase T1B family. The 26S proteasome consists of a 20S proteasome core and two 19S regulatory subunits. The 20S proteasome core is composed of 28 subunits that are arranged in four stacked rings, resulting in a barrel-shaped structure. The two end rings are each formed by seven alpha subunits, and the two central rings are each formed by seven beta subunits. The catalytic chamber with the active sites is on the inside of the barrel.

Its subcellular location is the cytoplasm. The protein localises to the nucleus. In terms of biological role, non-catalytic component of the proteasome, a multicatalytic proteinase complex which is characterized by its ability to cleave peptides with Arg, Phe, Tyr, Leu, and Glu adjacent to the leaving group at neutral or slightly basic pH. The proteasome has an ATP-dependent proteolytic activity. This is Proteasome subunit beta type-3 (PBC1) from Oryza sativa subsp. japonica (Rice).